Here is an 804-residue protein sequence, read N- to C-terminus: Phenylalanine--tRNA ligase beta subunit (804 aa).

The 111-residue stretch at 38-148 folds into the tRNA-binding domain; the sequence is RSSLKGFVIA…EDAPIGGLFA (111 aa). The B5 domain occupies 401–476; that stretch reads PEIKQIAFPF…RIYGLDKIEP (76 aa). Positions 454, 460, 463, and 464 each coordinate Mg(2+). Positions 710 to 803 constitute an FDX-ACB domain; that stretch reads SPFQMVRRDF…VTKATGAYLR (94 aa).

It belongs to the phenylalanyl-tRNA synthetase beta subunit family. Type 1 subfamily. As to quaternary structure, tetramer of two alpha and two beta subunits. Mg(2+) serves as cofactor.

The protein localises to the cytoplasm. The catalysed reaction is tRNA(Phe) + L-phenylalanine + ATP = L-phenylalanyl-tRNA(Phe) + AMP + diphosphate + H(+). This chain is Phenylalanine--tRNA ligase beta subunit, found in Bartonella quintana (strain Toulouse) (Rochalimaea quintana).